Reading from the N-terminus, the 643-residue chain is MIKITLKDGSIKEVEAGLSIFEIAQSISQGLARNACCGILNGKVEDLRFIVNEDSSLEICTFDSKEGQHAFNHTASHVLAAAVKRLFPQDKLAIGPSIDNGFYYDFDTEKPFSADQLNKLEEEMKKIIKENPEIKRFELPRNEALELMKDEPYKVELINDLPEGEVISFYQIGDFVDLCAGPHLMAVKPIKAVKLLRSTGAYWKGDEKNKMLSRVYGTAFPKKSELDAYLEALEEAKKRDHNKLGRELGIFTTDENVGQGLPLLMPKGARIIQTLQRWIEDEEQRRGYVLTKTPLMAKSDLYKISGHWDHYKDGMFVLGDEEKDSEVFALRPMTCPFQYAIYNSTQHSYRDLPVRFAETSTLFRNESSGEMHGLIRVRQFTLADGHIVCTPEQLEDEFKNTVDLVKYVMETLGIADDITYRFSKWDPNNTEKYINDPEAWENTQNIMREILNHLNIDFTEADDEAAFYGPKLDIQFKNVHGKEDTIITIQIDFALAERFGMYYIDKDGEKKRPYIIHRSSIGCYERTLAMLIEKYAGALPTWIAPVQAKVLPLSDKYADYANEVVEELRRRGVRVEADHRAEKIGYKIREARLERTPYILVVGEKEAENKEVSVRSRKNGEEGAMPLADFVNRIVLEIANREN.

The region spanning 1–61 (MIKITLKDGS…NEDSSLEICT (61 aa)) is the TGS domain. Residues 240-540 (DHNKLGRELG…LIEKYAGALP (301 aa)) form a catalytic region. Zn(2+) is bound by residues Cys-335, His-386, and His-517.

Belongs to the class-II aminoacyl-tRNA synthetase family. As to quaternary structure, homodimer. Zn(2+) is required as a cofactor.

The protein localises to the cytoplasm. The catalysed reaction is tRNA(Thr) + L-threonine + ATP = L-threonyl-tRNA(Thr) + AMP + diphosphate + H(+). Functionally, catalyzes the attachment of threonine to tRNA(Thr) in a two-step reaction: L-threonine is first activated by ATP to form Thr-AMP and then transferred to the acceptor end of tRNA(Thr). Also edits incorrectly charged L-seryl-tRNA(Thr). This chain is Threonine--tRNA ligase, found in Clostridium perfringens (strain ATCC 13124 / DSM 756 / JCM 1290 / NCIMB 6125 / NCTC 8237 / Type A).